The following is a 232-amino-acid chain: tRNA (guanine-N(1)-)-methyltransferase (232 aa).

S-adenosyl-L-methionine contacts are provided by residues Gly111 and 131–136; that span reads IGDYIL.

The protein belongs to the RNA methyltransferase TrmD family. As to quaternary structure, homodimer.

The protein localises to the cytoplasm. The enzyme catalyses guanosine(37) in tRNA + S-adenosyl-L-methionine = N(1)-methylguanosine(37) in tRNA + S-adenosyl-L-homocysteine + H(+). Its function is as follows. Specifically methylates guanosine-37 in various tRNAs. The polypeptide is tRNA (guanine-N(1)-)-methyltransferase (Bartonella quintana (strain Toulouse) (Rochalimaea quintana)).